Consider the following 204-residue polypeptide: Superoxide dismutase [Mn] (204 aa).

His27 serves as a coordination point for Mn(2+). 2 positions are modified to phosphothreonine: Thr34 and Thr70. Residues His82, Asp164, and His168 each coordinate Mn(2+).

It belongs to the iron/manganese superoxide dismutase family. In terms of assembly, homodimer. Mn(2+) is required as a cofactor.

The enzyme catalyses 2 superoxide + 2 H(+) = H2O2 + O2. In terms of biological role, destroys superoxide anion radicals which are normally produced within the cells and which are toxic to biological systems. This chain is Superoxide dismutase [Mn] (sodA), found in Bacillus caldotenax.